The following is a 304-amino-acid chain: Aspartate carbamoyltransferase catalytic subunit (304 aa).

Residues Arg-49 and Thr-50 each coordinate carbamoyl phosphate. Lys-77 is an L-aspartate binding site. Carbamoyl phosphate-binding residues include Arg-99, His-127, and Gln-130. Positions 160 and 211 each coordinate L-aspartate. Carbamoyl phosphate-binding residues include Ala-252 and Pro-253.

The protein belongs to the aspartate/ornithine carbamoyltransferase superfamily. ATCase family. Heterododecamer (2C3:3R2) of six catalytic PyrB chains organized as two trimers (C3), and six regulatory PyrI chains organized as three dimers (R2).

The enzyme catalyses carbamoyl phosphate + L-aspartate = N-carbamoyl-L-aspartate + phosphate + H(+). Its pathway is pyrimidine metabolism; UMP biosynthesis via de novo pathway; (S)-dihydroorotate from bicarbonate: step 2/3. Its function is as follows. Catalyzes the condensation of carbamoyl phosphate and aspartate to form carbamoyl aspartate and inorganic phosphate, the committed step in the de novo pyrimidine nucleotide biosynthesis pathway. This chain is Aspartate carbamoyltransferase catalytic subunit, found in Bacillus cereus (strain G9842).